Here is a 131-residue protein sequence, read N- to C-terminus: uncharacterized protein (131 aa).

The disordered stretch occupies residues 15–43 (QLQAEHGSAPSNIASGPSSNQQQQEVQDE). Over residues 23 to 34 (APSNIASGPSSN) the composition is skewed to polar residues.

The protein belongs to the PDCD5 family.

This is an uncharacterized protein from Schizosaccharomyces pombe (strain 972 / ATCC 24843) (Fission yeast).